We begin with the raw amino-acid sequence, 204 residues long: Molybdenum cofactor guanylyltransferase (204 aa).

GTP-binding positions include 10 to 12 (LAG), Lys23, Asn51, Asp69, and Asp99. Asp99 contacts Mg(2+).

It belongs to the MobA family. As to quaternary structure, monomer. Mg(2+) is required as a cofactor.

It localises to the cytoplasm. The enzyme catalyses Mo-molybdopterin + GTP + H(+) = Mo-molybdopterin guanine dinucleotide + diphosphate. Functionally, transfers a GMP moiety from GTP to Mo-molybdopterin (Mo-MPT) cofactor (Moco or molybdenum cofactor) to form Mo-molybdopterin guanine dinucleotide (Mo-MGD) cofactor. The sequence is that of Molybdenum cofactor guanylyltransferase from Shewanella piezotolerans (strain WP3 / JCM 13877).